A 594-amino-acid polypeptide reads, in one-letter code: 3-hydroxy-3-methylglutaryl coenzyme A reductase 2-A (594 aa).

Positions 1-32 (MDVRRRPVKSLSSAKTATAGEPPKSQQQHPKA) are disordered. Over 1 to 37 (MDVRRRPVKSLSSAKTATAGEPPKSQQQHPKASDALP) the chain is Lumenal. A helical transmembrane segment spans residues 38 to 58 (LPLYLTNGLFFTMFFSVMYFL). Over 59–81 (LHRWREKIRNSTPLHVVTLSELA) the chain is Cytoplasmic. A helical membrane pass occupies residues 82–102 (ALVLLMASVIYLLGFFGIGFV). Topologically, residues 103–549 (RSVIRPSPDA…SKESPGSNSR (447 aa)) are lumenal. A glycan (N-linked (GlcNAc...) asparagine) is linked at asparagine 261. The active-site Charge relay system is glutamate 273. Asparagine 337 carries an N-linked (GlcNAc...) asparagine glycan. Residues lysine 405 and aspartate 481 each act as charge relay system in the active site. Residues 550–570 (LLASIVAGSVLAGELSLMSAL) form a helical membrane-spanning segment. Topologically, residues 571–594 (AAGQLVKSHMKYNRSSKDITKLSS) are cytoplasmic. Histidine 579 serves as the catalytic Proton donor.

Belongs to the HMG-CoA reductase family. As to expression, mostly expressed in the petioles of seedlings, seedlings and roots, and, to a lower extent, in seeds, leaves, stems and flowers.

It is found in the endoplasmic reticulum membrane. Its subcellular location is the plastid. The protein localises to the chloroplast membrane. The protein resides in the peroxisome membrane. It carries out the reaction (R)-mevalonate + 2 NADP(+) + CoA = (3S)-3-hydroxy-3-methylglutaryl-CoA + 2 NADPH + 2 H(+). It functions in the pathway metabolic intermediate biosynthesis; (R)-mevalonate biosynthesis; (R)-mevalonate from acetyl-CoA: step 3/3. Competitive inhibition by mevinolin (Mev) is leading to a significant reduction of total ginsenoside in adventitious roots. Triggered by darkness. In terms of biological role, catalyzes the synthesis of mevalonate, the specific precursor of all isoprenoid compounds present in plants. Component of the triterpene saponins (e.g. ginsenosides or panaxosides) and phytosterols biosynthetic pathways. In Panax ginseng (Korean ginseng), this protein is 3-hydroxy-3-methylglutaryl coenzyme A reductase 2-A.